We begin with the raw amino-acid sequence, 149 residues long: UPF0208 membrane protein VFMJ11_0876 (149 aa).

The next 2 helical transmembrane spans lie at 41–61 (FAVK…MVFN) and 69–89 (AIII…WLGN).

It belongs to the UPF0208 family.

It localises to the cell inner membrane. The sequence is that of UPF0208 membrane protein VFMJ11_0876 from Aliivibrio fischeri (strain MJ11) (Vibrio fischeri).